The following is a 203-amino-acid chain: Ribosomal RNA small subunit methyltransferase G (203 aa).

S-adenosyl-L-methionine-binding positions include glycine 73, leucine 78, 124 to 125 (VE), and arginine 139.

This sequence belongs to the methyltransferase superfamily. RNA methyltransferase RsmG family.

It is found in the cytoplasm. It catalyses the reaction guanosine(527) in 16S rRNA + S-adenosyl-L-methionine = N(7)-methylguanosine(527) in 16S rRNA + S-adenosyl-L-homocysteine. Functionally, specifically methylates the N7 position of guanine in position 527 of 16S rRNA. The protein is Ribosomal RNA small subunit methyltransferase G of Haemophilus influenzae (strain 86-028NP).